Consider the following 242-residue polypeptide: uncharacterized protein (242 aa).

Positions 198, 218, and 227 each coordinate S-adenosyl-L-methionine.

Belongs to the class IV-like SAM-binding methyltransferase superfamily. RNA methyltransferase TrmH family.

This is an uncharacterized protein from Mycoplasma pneumoniae (strain ATCC 29342 / M129 / Subtype 1) (Mycoplasmoides pneumoniae).